Consider the following 114-residue polypeptide: Chaperone protein YscY (114 aa).

As to quaternary structure, binds to YscX.

It localises to the cytoplasm. In terms of biological role, required for Yop secretion. Functions probably as a chaperone which stabilizes YscX within the cell, before its secretion. The protein is Chaperone protein YscY (yscY) of Yersinia enterocolitica.